Reading from the N-terminus, the 471-residue chain is Ribosomal protein uS12 methylthiotransferase RimO (471 aa).

An MTTase N-terminal domain is found at 19–134 (PRVGFVSLGC…VMNAVHTHLP (116 aa)). [4Fe-4S] cluster-binding residues include Cys28, Cys64, Cys93, Cys169, Cys173, and Cys176. The Radical SAM core domain occupies 155–396 (LTPRHYAYLK…MAVAEEVSTA (242 aa)). The TRAM domain occupies 399–471 (QKRVGQTMQV…QGHDLVGQPV (73 aa)).

Belongs to the methylthiotransferase family. RimO subfamily. It depends on [4Fe-4S] cluster as a cofactor.

Its subcellular location is the cytoplasm. It catalyses the reaction L-aspartate(89)-[ribosomal protein uS12]-hydrogen + (sulfur carrier)-SH + AH2 + 2 S-adenosyl-L-methionine = 3-methylsulfanyl-L-aspartate(89)-[ribosomal protein uS12]-hydrogen + (sulfur carrier)-H + 5'-deoxyadenosine + L-methionine + A + S-adenosyl-L-homocysteine + 2 H(+). In terms of biological role, catalyzes the methylthiolation of an aspartic acid residue of ribosomal protein uS12. The sequence is that of Ribosomal protein uS12 methylthiotransferase RimO from Delftia acidovorans (strain DSM 14801 / SPH-1).